The following is a 1319-amino-acid chain: ERAD-associated E3 ubiquitin-protein ligase DOA10 (1319 aa).

Met-1 bears the N-acetylmethionine mark. The Cytoplasmic segment spans residues 1 to 131; that stretch reads MDVDSDVNVS…LTFFEKARLA (131 aa). An RING-CH-type zinc finger spans residues 31-100; it reads DDAPSGATCR…DICHYPIQFK (70 aa). 8 residues coordinate Zn(2+): Cys-39, Cys-42, Cys-56, Cys-58, His-66, Cys-69, Cys-90, and Cys-93. The chain crosses the membrane as a helical span at residues 132–152; the sequence is LTIGLAAVLYIIGVPLVWNMF. The Lumenal segment spans residues 153 to 203; sequence GKLYTMMLDGSSPYPGDFLKSLIYGYDQSATPELTTRAIFYQLLQNHSFTS. The helical transmembrane segment at 204–224 threads the bilayer; that stretch reads LQFIMIVILHIALYFQYDMIV. At 225–468 the chain is on the cytoplasmic side; that stretch reads REDVFSKMVF…GPLVINLKLK (244 aa). Residues 291-306 show a composition bias toward low complexity; the sequence is ADNNNNVINPRNDNVP. Disordered regions lie at residues 291-315 and 329-381; these read ADNNNNVINPRNDNVPPQDPNDHRN and EATE…EADY. Residues 469–489 form a helical membrane-spanning segment; it reads LLNVIAYFIIAVVFTAIYLAI. At 490–491 the chain is on the lumenal side; sequence SY. Residues 492–512 form a helical membrane-spanning segment; the sequence is LFPTFIGFGLLKIYFGIFKVI. Residues 513 to 626 are Cytoplasmic-facing; the sequence is LRGLCHLYYL…LFALKCTFKV (114 aa). The helical transmembrane segment at 627-647 threads the bilayer; the sequence is FTLFFIELAGFPILAGVMLDF. At 648–660 the chain is on the lumenal side; that stretch reads SLFCPILASNSRM. Residues 661–681 traverse the membrane as a helical segment; it reads LWVPSICAIWPPFSLFVYWTI. Residues 682 to 739 lie on the Cytoplasmic side of the membrane; sequence GTLYMYWFAKYIGMIRKNIIRPGVLFFIRSPEDPNIKILHDSLIHPMSIQLSRLCLSM. The helical transmembrane segment at 740–760 threads the bilayer; sequence FIYAIFIVLGFGFHTRIFFPF. The Lumenal portion of the chain corresponds to 761–777; sequence MLKSNLLSVPEAYKPTS. The helical transmembrane segment at 778–797 threads the bilayer; that stretch reads IISWKFNTILLTLYFTKRIL. The Cytoplasmic portion of the chain corresponds to 798 to 965; sequence ESSSYVKPLL…YVPPDFRLRY (168 aa). Residues 966–986 traverse the membrane as a helical segment; sequence MTLLGLVWLFASILMLGVTFI. Residues 987–1019 lie on the Lumenal side of the membrane; that stretch reads SQALINFVCSFGFLPVVKLLLGERNKVYVAWKE. A helical membrane pass occupies residues 1020-1040; sequence LSDISYSYLNIYYVCVGSVCL. At 1041–1113 the chain is on the cytoplasmic side; the sequence is SKIAKDILHF…IFDSMLVKYN (73 aa). The helical transmembrane segment at 1114–1134 threads the bilayer; it reads LMVFIAIMIAVIRTMVSWVVL. Residues 1135-1168 lie on the Lumenal side of the membrane; sequence TDGILACYNYLTIRVFGNSSYTIGNSKWFKYDES. Residues 1169–1189 form a helical membrane-spanning segment; the sequence is LLFVVWIISSMVNFGTGYKSL. At 1190–1213 the chain is on the cytoplasmic side; it reads KLFFRNRNTSKLNFLKTMALELFK. A helical membrane pass occupies residues 1214 to 1234; sequence QGFLHMVIYVLPIIILSLVFL. At 1235–1270 the chain is on the lumenal side; the sequence is RDVSTKQIIDISHGSRSFTLSLNESFPTWTRMQDIY. A helical transmembrane segment spans residues 1271–1291; that stretch reads FGLLIALESFTFFFQATVLFI. The Cytoplasmic segment spans residues 1292–1319; the sequence is QWFKSTVQNVKDEVYTKGRALENLPDES.

This sequence belongs to the DOA10/MARCH6 family. Component of the DOA10 ubiquitin ligase complex which contains E3 ligase SSM4/DOA10 and CDC48-binding protein UBX2/SEL1. The DOA10 complex interacts with the heterotrimeric CDC48-NPL4-UFD1 ATPase complex which is recruited by UBX2/SEL1 via its interaction with CDC48. Interacts with its associated ubiquitin conjugating enzymes UBC6 and UBC7 with its membrane anchor CUE1. Interacts with PEX29.

It localises to the endoplasmic reticulum membrane. The protein resides in the nucleus inner membrane. The enzyme catalyses S-ubiquitinyl-[E2 ubiquitin-conjugating enzyme]-L-cysteine + [acceptor protein]-L-lysine = [E2 ubiquitin-conjugating enzyme]-L-cysteine + N(6)-ubiquitinyl-[acceptor protein]-L-lysine.. It functions in the pathway protein modification; protein ubiquitination. In terms of biological role, E3 ubiquitin-protein ligase which accepts ubiquitin specifically from endoplasmic reticulum-associated UBC6 and UBC7 E2 ligases, and transfers it to substrates promoting their degradation. Mediates the degradation of a broad range of substrates, including endoplasmic reticulum membrane proteins (ERQC), soluble nuclear proteins and soluble cytoplasmic proteins (CytoQC). Component of the DOA10 ubiquitin ligase complex, which is part of the ERAD-C pathway responsible for the rapid degradation of membrane proteins with misfolded cytoplasmic domains. ERAD-C substrates are ubiquitinated through DOA10 in conjunction with the E2 ubiquitin-conjugating enzymes UBC6 and UBC7-CUE1. Ubiquitinated substrates are then removed to the cytosol via the action of the UFD1-NPL4-CDC48/p97 (UNC) AAA ATPase complex and targeted to the proteasome. Also recognizes the N-terminally acetylated residue of proteins as degradation signal (degron). N-terminally acetylated target proteins include MATALPHA2, TBF1, SLK19, YMR090W, HIS3, HSP104, UBP6 and ARO8. Catalyzes ubiquitination of mislocalized tail-anchored proteins that are extracted from the mitochondrion membrane by MSP1: following extraction, mistargeted proteins are transferred to the endoplasmic reticulum, where they are ubiquitinated by DOA10 and degraded by the proteasome. This is ERAD-associated E3 ubiquitin-protein ligase DOA10 (SSM4) from Saccharomyces cerevisiae (strain ATCC 204508 / S288c) (Baker's yeast).